The sequence spans 512 residues: Maturase K (512 aa).

This sequence belongs to the intron maturase 2 family. MatK subfamily.

The protein resides in the plastid. The protein localises to the chloroplast. Its function is as follows. Usually encoded in the trnK tRNA gene intron. Probably assists in splicing its own and other chloroplast group II introns. The polypeptide is Maturase K (Lemna minuta (Least duckweed)).